A 1048-amino-acid polypeptide reads, in one-letter code: Putative truncated guanine nucleotide exchange factor SDC25 (1048 aa).

2 disordered regions span residues Ser-208–Ser-242 and Leu-419–Glu-444. Over residues Thr-212 to Ser-224 the composition is skewed to low complexity. Residues Ser-578–Lys-710 enclose the N-terminal Ras-GEF domain. The Ras-GEF domain maps to Asp-748–Lys-995. The interval Arg-997–Lys-1048 is disordered. The segment covering Ser-1010 to Pro-1032 has biased composition (basic and acidic residues). Over residues Gln-1035 to Lys-1048 the composition is skewed to basic residues.

In terms of biological role, promotes the exchange of Ras-bound GDP by GTP. This Saccharomyces cerevisiae (strain ATCC 204508 / S288c) (Baker's yeast) protein is Putative truncated guanine nucleotide exchange factor SDC25 (SDC25).